Consider the following 427-residue polypeptide: UPF0229 protein YeaH (427 aa).

The segment covering 79–90 (NDHFVQNDRIER) has biased composition (basic and acidic residues). Residues 79–110 (NDHFVQNDRIERPQGGGGGSGSGQGQASQDGE) are disordered. Over residues 92–102 (QGGGGGSGSGQ) the composition is skewed to gly residues.

Belongs to the UPF0229 family.

The sequence is that of UPF0229 protein YeaH from Escherichia coli O127:H6 (strain E2348/69 / EPEC).